Reading from the N-terminus, the 290-residue chain is ATP synthase gamma chain (290 aa).

This sequence belongs to the ATPase gamma chain family. F-type ATPases have 2 components, CF(1) - the catalytic core - and CF(0) - the membrane proton channel. CF(1) has five subunits: alpha(3), beta(3), gamma(1), delta(1), epsilon(1). CF(0) has three main subunits: a, b and c.

Its subcellular location is the cell inner membrane. Functionally, produces ATP from ADP in the presence of a proton gradient across the membrane. The gamma chain is believed to be important in regulating ATPase activity and the flow of protons through the CF(0) complex. The protein is ATP synthase gamma chain of Thiobacillus denitrificans (strain ATCC 25259 / T1).